A 333-amino-acid polypeptide reads, in one-letter code: Aquaporin-1 (333 aa).

The segment at 1–26 (MQKMSEKPLYRAAENPTRNADRRAGR) is disordered. 2 helical membrane-spanning segments follow: residues 85–105 (LAMF…HFTG) and 116–136 (FHGF…GGII). Positions 137-139 (NPA) match the NPA 1 motif. Transmembrane regions (helical) follow at residues 156 to 176 (LVLV…VYLI), 213 to 233 (TGAI…FLSI), and 245 to 265 (LFPF…SYSA). The NPA 2 motif lies at 270–272 (NPA). Residues 303–323 (WLFPYVGALFGAVMYQIFVGV) form a helical membrane-spanning segment.

It belongs to the MIP/aquaporin (TC 1.A.8) family.

The protein resides in the cell membrane. Its function is as follows. Aquaglyceroporin that may modulate the water content and osmolytes during anhydrobiosis. This is Aquaporin-1 from Milnesium tardigradum (Water bear).